Here is a 931-residue protein sequence, read N- to C-terminus: Envelope glycoprotein B (931 aa).

Positions 1-71 (MSPCGYYSKW…FSMFVTAVVS (71 aa)) are cleaved as a signal peptide. The Virion surface portion of the chain corresponds to 72-786 (VSPSSFYESL…HGFTTFLSNP (715 aa)). Disulfide bonds link cysteine 122/cysteine 584, cysteine 139/cysteine 540, cysteine 213/cysteine 277, cysteine 369/cysteine 417, and cysteine 608/cysteine 645. Asparagine 147 carries N-linked (GlcNAc...) asparagine; by host glycosylation. The interval 179-185 (AWAGSSY) is involved in fusion and/or binding to host membrane. The N-linked (GlcNAc...) asparagine; by host glycan is linked to asparagine 257. Residues 264 to 271 (GTPGTYRT) form an involved in fusion and/or binding to host membrane region. N-linked (GlcNAc...) asparagine; by host glycans are attached at residues asparagine 435, asparagine 503, asparagine 620, and asparagine 686. 2 hydrophobic membrane proximal region regions span residues 731 to 784 (IDKV…TFLS) and 764 to 784 (VVLG…TFLS). The chain crosses the membrane as a helical span at residues 787-807 (FGALAVGLLVLAGLVAAFFAY). Over 808–931 (RYVLKLKTSP…RVRTENVTGV (124 aa)) the chain is Intravirion. The Golgi targeting signature appears at 881 to 884 (YMTL). The Di-leucine internalization motif signature appears at 904-906 (LLT). The short motif at 920-923 (YSRV) is the Internalization motif element.

Belongs to the herpesviridae glycoprotein B family. As to quaternary structure, homotrimer; disulfide-linked. Binds to heparan sulfate proteoglycans. Interacts with gH/gL heterodimer. Interacts with gE. In terms of processing, a proteolytic cleavage by host furin generates two subunits that remain linked by disulfide bonds.

It localises to the virion membrane. The protein localises to the host cell membrane. It is found in the host endosome membrane. The protein resides in the host Golgi apparatus membrane. In terms of biological role, envelope glycoprotein that forms spikes at the surface of virion envelope. Essential for the initial attachment to heparan sulfate moieties of the host cell surface proteoglycans. Involved in fusion of viral and cellular membranes leading to virus entry into the host cell. Following initial binding to its host receptors, membrane fusion is mediated by the fusion machinery composed at least of gB and the heterodimer gH/gL. May be involved in the fusion between the virion envelope and the outer nuclear membrane during virion egress. The protein is Envelope glycoprotein B of Varicella-zoster virus (strain Dumas) (HHV-3).